The sequence spans 303 residues: uncharacterized protein (303 aa).

The Fe2OG dioxygenase domain occupies 173–300; the sequence is KLPELLGQLN…RFTVNGWIRK (128 aa).

Fe(2+) serves as cofactor. Requires L-ascorbate as cofactor.

This is an uncharacterized protein from Synechocystis sp. (strain ATCC 27184 / PCC 6803 / Kazusa).